Reading from the N-terminus, the 174-residue chain is Ribosome maturation factor RimM (174 aa).

One can recognise a PRC barrel domain in the interval 99 to 172; sequence ADEFFYHDVI…RLVIRPIAGL (74 aa).

The protein belongs to the RimM family. In terms of assembly, binds ribosomal protein uS19.

The protein localises to the cytoplasm. An accessory protein needed during the final step in the assembly of 30S ribosomal subunit, possibly for assembly of the head region. Essential for efficient processing of 16S rRNA. May be needed both before and after RbfA during the maturation of 16S rRNA. It has affinity for free ribosomal 30S subunits but not for 70S ribosomes. In Chloroflexus aurantiacus (strain ATCC 29366 / DSM 635 / J-10-fl), this protein is Ribosome maturation factor RimM.